A 375-amino-acid chain; its full sequence is POU domain, class 3, transcription factor 1 (375 aa).

Disordered stretches follow at residues 1–29, 56–139, and 151–200; these read MAATAQYLPRNNSLPSNPLMHPDSDRMHQ, MSLT…QPLI, and MLGP…PSSD. 3 stretches are compositionally biased toward polar residues: residues 107–117, 130–139, and 151–160; these read VHQQTPSSHAW, PGSNSHQPLI, and MLGPQASSLH. The span at 162–171 shows a compositional bias: basic and acidic residues; it reads SMRDPLHDDP. One can recognise a POU-specific domain in the interval 194–268; the sequence is EDAPSSDDLE…LLNKWLEETD (75 aa). A DNA-binding region (homeobox) is located at residues 286-345; that stretch reads KRKKRTSIEVGVKGALENHFLKCPKPSAHEITSLADSLQLEKEVVRVWFCNRRQKEKRMT.

This sequence belongs to the POU transcription factor family. Class-3 subfamily.

It is found in the nucleus. Functionally, acts as a transcription factor. May play a role in neuronal differentiation. This Xenopus tropicalis (Western clawed frog) protein is POU domain, class 3, transcription factor 1.